The primary structure comprises 382 residues: MRKRKGSADHDSSFTATLTDGSSDLKQCHKGTDADTDPGGSGKEMGRRCRRGGLMWRLRRILIWLLGIYIAIPVIIKVCPSIQAKLVFLNFVRVPYFIDLKRPQDQGMNHTHNFYLQPEEGINIGVWHTVPAGMWREAQAKDAEWYEKSFQSSHPVILYLHGNAGTRGGDHRVQLYKVLSSLGYHVVTFDYRGWGDSEGSPSERGMTSDALFLYQWIKQRIGPKPLYIWGHSLGTGVATNLVRRLCDRGTPPDALILESPFTNIREEAKSHPFSMVYRYLPGFDWFFLDAISANDIRFASDENVNHISCPVLILHAEDDTVVPFQLGKKLYDLAAQSKSLNGHKVQFIPFSSSLGYRHKFIYKSPQLPNILSDFLRAPHPHG.

The segment covering 1-12 (MRKRKGSADHDS) has biased composition (basic and acidic residues). Residues 1–45 (MRKRKGSADHDSSFTATLTDGSSDLKQCHKGTDADTDPGGSGKEM) form a disordered region. At 1 to 60 (MRKRKGSADHDSSFTATLTDGSSDLKQCHKGTDADTDPGGSGKEMGRRCRRGGLMWRLRR) the chain is on the cytoplasmic side. Residues 13 to 25 (SFTATLTDGSSDL) are compositionally biased toward polar residues. The helical transmembrane segment at 61–81 (ILIWLLGIYIAIPVIIKVCPS) threads the bilayer. At 82-382 (IQAKLVFLNF…DFLRAPHPHG (301 aa)) the chain is on the extracellular side. Asn109 carries N-linked (GlcNAc...) asparagine glycosylation. Ser232 functions as the Nucleophile in the catalytic mechanism. Residues Asp319 and His358 each act as charge relay system in the active site.

It belongs to the serine esterase family. Ubiquitously expressed in adult tissues.

The protein localises to the endoplasmic reticulum membrane. It carries out the reaction 1-(9Z-octadecenoyl)-sn-glycero-3-phospho-L-serine + H2O = sn-glycero-3-phospho-L-serine + (9Z)-octadecenoate + H(+). The enzyme catalyses 1-(9Z-octadecenoyl)-sn-glycero-3-phospho-(1'-sn-glycerol) + H2O = sn-glycero-3-phospho-(1'-sn-glycerol) + (9Z)-octadecenoate + H(+). It catalyses the reaction 1-(9Z-octadecenoyl)-sn-glycero-3-phospho-(1D-myo-inositol) + H2O = sn-glycero-3-phospho-1D-myo-inositol + (9Z)-octadecenoate + H(+). The catalysed reaction is 1-(9Z-octadecenoyl)-sn-glycero-3-phosphoethanolamine + H2O = sn-glycero-3-phosphoethanolamine + (9Z)-octadecenoate + H(+). It carries out the reaction 1-(9Z-octadecenoyl)-sn-glycero-3-phosphocholine + H2O = 1-(9Z-octadecenoyl)-sn-glycerol + phosphocholine + H(+). The enzyme catalyses 2-(9Z-octadecenoyl)-glycerol + H2O = glycerol + (9Z)-octadecenoate + H(+). It catalyses the reaction 1-hexadecanoyl-sn-glycero-3-phospho-L-serine + H2O = sn-glycero-3-phospho-L-serine + hexadecanoate + H(+). The catalysed reaction is 2-(5Z,8Z,11Z,14Z-eicosatetraenoyl)-glycerol + H2O = glycerol + (5Z,8Z,11Z,14Z)-eicosatetraenoate + H(+). It carries out the reaction Hydrolyzes glycerol monoesters of long-chain fatty acids.. The enzyme catalyses 1-decanoylglycerol + H2O = decanoate + glycerol + H(+). It catalyses the reaction 1-dodecanoylglycerol + H2O = dodecanoate + glycerol + H(+). The catalysed reaction is 1-tetradecanoylglycerol + H2O = tetradecanoate + glycerol + H(+). It carries out the reaction 2-hexadecanoylglycerol + H2O = glycerol + hexadecanoate + H(+). The enzyme catalyses 1-(9Z-octadecenoyl)-glycerol + H2O = glycerol + (9Z)-octadecenoate + H(+). It catalyses the reaction 2-(9Z,12Z-octadecadienoyl)-glycerol + H2O = (9Z,12Z)-octadecadienoate + glycerol + H(+). The catalysed reaction is 1-(5Z,8Z,11Z,14Z-eicosatetraenoyl)-glycerol + H2O = glycerol + (5Z,8Z,11Z,14Z)-eicosatetraenoate + H(+). It carries out the reaction 1-(9Z,12Z-octadecadienoyl)-glycerol + H2O = (9Z,12Z)-octadecadienoate + glycerol + H(+). The enzyme catalyses 1-hexadecanoylglycerol + H2O = glycerol + hexadecanoate + H(+). It catalyses the reaction 1-octadecanoylglycerol + H2O = octadecanoate + glycerol + H(+). The catalysed reaction is 1-octadecanoyl-2-(9,10-epoxyoctadecanoyl)-sn-glycero-3-phospho-L-serine + H2O = 9,10-epoxyoctadecanoate + 1-octadecanoyl-sn-glycero-3-phosphoserine + H(+). It carries out the reaction 1-octadecanoyl-2-(10-hydroxyoctadecanoyl)-sn-glycero-3-phospho-L-serine + H2O = 1-octadecanoyl-sn-glycero-3-phosphoserine + 10-hydroxyoctadecanoate + H(+). The enzyme catalyses 1-hexadecanoyl-2-(10-hydroxyoctadecanoyl)-sn-glycero-3-phospho-L-serine + H2O = 10-hydroxyoctadecanoate + 1-hexadecanoyl-sn-glycero-3-phospho-L-serine + H(+). Functionally, lysophosphatidylserine (LPS) lipase that mediates the hydrolysis of lysophosphatidylserine, a class of signaling lipids that regulates immunological and neurological processes. Represents a major lysophosphatidylserine lipase in the brain, thereby playing a key role in the central nervous system. Also able to hydrolyze oxidized phosphatidylserine; oxidized phosphatidylserine is produced in response to severe inflammatory stress and constitutes a proapoptotic 'eat me' signal. Also has monoacylglycerol (MAG) lipase activity: hydrolyzes 2-arachidonoylglycerol (2-AG), thereby acting as a regulator of endocannabinoid signaling pathways. Has a strong preference for very-long-chain lipid substrates; substrate specificity is likely due to improved catalysis and not improved substrate binding. In Danio rerio (Zebrafish), this protein is Lysophosphatidylserine lipase ABHD12.